Here is a 336-residue protein sequence, read N- to C-terminus: Dihydroorotate dehydrogenase (quinone) (336 aa).

FMN is bound by residues 62-66 and Thr-86; that span reads AGLDK. Lys-66 contacts substrate. 111–115 is a substrate binding site; the sequence is NRMGF. FMN-binding residues include Asn-139 and Asn-172. Position 172 (Asn-172) interacts with substrate. The Nucleophile role is filled by Ser-175. Asn-177 provides a ligand contact to substrate. 2 residues coordinate FMN: Lys-217 and Thr-245. 246-247 contributes to the substrate binding site; that stretch reads NT. FMN is bound by residues Gly-268, Gly-297, and 318 to 319; that span reads YT.

This sequence belongs to the dihydroorotate dehydrogenase family. Type 2 subfamily. In terms of assembly, monomer. The cofactor is FMN.

Its subcellular location is the cell membrane. The enzyme catalyses (S)-dihydroorotate + a quinone = orotate + a quinol. The protein operates within pyrimidine metabolism; UMP biosynthesis via de novo pathway; orotate from (S)-dihydroorotate (quinone route): step 1/1. In terms of biological role, catalyzes the conversion of dihydroorotate to orotate with quinone as electron acceptor. This Vibrio parahaemolyticus serotype O3:K6 (strain RIMD 2210633) protein is Dihydroorotate dehydrogenase (quinone).